The sequence spans 231 residues: Acyl-protein thioesterase 2 (231 aa).

Residue Cys-2 is the site of S-palmitoyl cysteine attachment. Ser-82 bears the Phosphoserine mark. Residues Ser-122, Asp-176, and His-210 each act as charge relay system in the active site.

It belongs to the AB hydrolase superfamily. AB hydrolase 2 family. As to expression, ubiquitous; detected at low levels.

Its subcellular location is the cytoplasm. It catalyses the reaction S-hexadecanoyl-L-cysteinyl-[protein] + H2O = L-cysteinyl-[protein] + hexadecanoate + H(+). The enzyme catalyses prostaglandin E2 1-glyceryl ester + H2O = prostaglandin E2 + glycerol + H(+). It carries out the reaction 1-hexadecanoyl-sn-glycero-3-phosphocholine + H2O = sn-glycerol 3-phosphocholine + hexadecanoate + H(+). The catalysed reaction is 1-octadecanoyl-sn-glycero-3-phosphocholine + H2O = octadecanoate + sn-glycerol 3-phosphocholine + H(+). It catalyses the reaction 1-hexadecanoyl-sn-glycero-3-phosphate + H2O = sn-glycerol 3-phosphate + hexadecanoate + H(+). The enzyme catalyses 1-hexadecanoyl-sn-glycero-3-phospho-L-serine + H2O = sn-glycero-3-phospho-L-serine + hexadecanoate + H(+). Acts as an acyl-protein thioesterase hydrolyzing fatty acids from S-acylated cysteine residues in proteins such as trimeric G alpha proteins, GSDMD, GAP43, ZDHHC6 or HRAS. Deacylates GAP43. Mediates depalmitoylation of ZDHHC6. Has lysophospholipase activity. Hydrolyzes prostaglandin glycerol esters (PG-Gs). Hydrolyzes PG-Gs in the following order prostaglandin D2-glycerol ester (PGD2-G) &gt; prostaglandin E2 glycerol ester (PGE2-G) &gt; prostaglandin F2-alpha-glycerol ester (PGF2-alpha-G). Hydrolyzes 1-arachidonoylglycerol but not 2-arachidonoylglycerol or arachidonoylethanolamide. The sequence is that of Acyl-protein thioesterase 2 (Lypla2) from Mus musculus (Mouse).